The following is an 85-amino-acid chain: Contulakin-Lt2 (85 aa).

The first 22 residues, 1–22, serve as a signal peptide directing secretion; the sequence is MQMAYWVMVMMMVGITAPLSEG. The propeptide occupies 23-61; it reads RKLNDAIRGLVPNDLTPQLLQSLVSRRHRVFHLDNTYLK. Cys-65 and Cys-70 form a disulfide bridge. Positions 76-85 are excised as a propeptide; sequence RRRDLKKRNK.

The protein belongs to the conotoxin C superfamily. Expressed by the venom duct.

The protein resides in the secreted. Acts as an agonist of neurotensin receptors. It binds to human neurotensin type 1 receptor (NTSR1), rat neurotensin types 1 and 2 receptors (NTSR1/NTSR2) and mouse neurotensin type 3 receptor (SORT1). This Conus litteratus (Lettered cone) protein is Contulakin-Lt2.